Here is a 241-residue protein sequence, read N- to C-terminus: tRNA (guanine-N(7)-)-methyltransferase (241 aa).

4 residues coordinate S-adenosyl-L-methionine: E71, E96, D123, and D146. D146 is a catalytic residue. Residues K150, D182, and 219 to 222 (TKFE) contribute to the substrate site.

The protein belongs to the class I-like SAM-binding methyltransferase superfamily. TrmB family.

It carries out the reaction guanosine(46) in tRNA + S-adenosyl-L-methionine = N(7)-methylguanosine(46) in tRNA + S-adenosyl-L-homocysteine. Its pathway is tRNA modification; N(7)-methylguanine-tRNA biosynthesis. Catalyzes the formation of N(7)-methylguanine at position 46 (m7G46) in tRNA. The chain is tRNA (guanine-N(7)-)-methyltransferase from Pseudoalteromonas translucida (strain TAC 125).